The chain runs to 323 residues: Sphingomyelinase D (323 aa).

The first 20 residues, 1–20 (MISLLRLCSFLAAGSILVQG), serve as a signal peptide directing secretion. His-59 is an active-site residue. Residues Glu-79, Asp-81, and Asp-127 each coordinate Mg(2+). Positions 308–315 (ATNDDNPW) match the SMD-tail motif.

It belongs to the sphingomyelinase D/phospholipase D family. Requires Mg(2+) as cofactor.

It localises to the secreted. The catalysed reaction is a sphingomyelin + H2O = an N-acylsphing-4-enine 1-phosphate + choline + H(+). Catalyzes the hydrolysis of sphingomyelin. Sphingomyelinases D are produced by some spider in their venoms, but also by arthropods such as ticks, or pathogenic bacteria and fungi. They might play a role in pathogenicity through different mechanisms, such as membrane destabilization and host cell penetration, but also pulmonary inflammation and cutaneous lesions. The protein is Sphingomyelinase D of Trichophyton rubrum (strain ATCC MYA-4607 / CBS 118892) (Athlete's foot fungus).